The chain runs to 703 residues: Elongation factor G 1 (703 aa).

One can recognise a tr-type G domain in the interval 8-290 (ERYRNIGISA…AVIDFLPSPV (283 aa)). GTP-binding positions include 17 to 24 (AHIDAGKT), 88 to 92 (DTPGH), and 142 to 145 (NKMD).

It belongs to the TRAFAC class translation factor GTPase superfamily. Classic translation factor GTPase family. EF-G/EF-2 subfamily.

The protein localises to the cytoplasm. Catalyzes the GTP-dependent ribosomal translocation step during translation elongation. During this step, the ribosome changes from the pre-translocational (PRE) to the post-translocational (POST) state as the newly formed A-site-bound peptidyl-tRNA and P-site-bound deacylated tRNA move to the P and E sites, respectively. Catalyzes the coordinated movement of the two tRNA molecules, the mRNA and conformational changes in the ribosome. This is Elongation factor G 1 from Cupriavidus metallidurans (strain ATCC 43123 / DSM 2839 / NBRC 102507 / CH34) (Ralstonia metallidurans).